A 642-amino-acid polypeptide reads, in one-letter code: Transcription factor 4 (642 aa).

Residues 1 to 25 show a composition bias toward polar residues; that stretch reads MFSPPVSSGKNGPTSLASGHFTGSN. The essential for MYOD1 inhibition stretch occupies residues 1-59; it reads MFSPPVSSGKNGPTSLASGHFTGSNVEDRSSSGSWGNGGHPSPSRNYGDGTPYDHMTSR. Disordered regions lie at residues 1-296, 311-354, 444-545, and 609-642; these read MFSP…SQTG, HTNN…EGPL, PNQV…MANN, and KRRE…MGQM. 3 positions are modified to phosphoserine: Ser42, Ser63, and Ser68. 5 stretches are compositionally biased toward polar residues: residues 83-98, 112-130, 181-191, 218-230, and 241-281; these read GSYS…QGCH, GTLS…SSNN, PAASTFPSSFF, GSSS…SSYC, and PSHS…TDSI. Positions 312-323 are enriched in low complexity; sequence TNNSFSSNPSTP. The segment covering 340–349 has biased composition (polar residues); the sequence is NGGQASSSPN. Position 347 is a phosphoserine (Ser347). The tract at residues 354–375 is leucine-zipper; sequence LHSLQSRIEDRLERLDDAIHVL. Composition is skewed to low complexity over residues 444 to 455 and 478 to 487; these read PNQVPVPQLPVQ and GQSVSSGSSE. Ser490 bears the Phosphoserine mark. Basic and acidic residues-rich tracts occupy residues 502–517 and 530–545; these read KSSE…KDIK and PEQK…MANN. One can recognise a bHLH domain in the interval 539–592; that stretch reads ERRMANNARERLRVRDINEAFKELGRMVQLHLKSDKPQTKLLILHQAVAVILSL. The segment at 594-617 is class A specific domain; sequence QQVRERNLNPKAACLKRREEEKVS.

In terms of assembly, efficient DNA binding requires dimerization with another bHLH protein. Forms homo- or heterooligomers with myogenin. Interacts with HIVEP2. Interacts with NEUROD2. Interacts with AGBL1. As to expression, widely expressed.

The protein localises to the nucleus. Its function is as follows. Transcription factor that binds to the immunoglobulin enhancer Mu-E5/KE5-motif. Involved in the initiation of neuronal differentiation. Activates transcription by binding to the E box (5'-CANNTG-3'). Binds to the thyroglobulin promoter. This is Transcription factor 4 (TCF4) from Canis lupus familiaris (Dog).